We begin with the raw amino-acid sequence, 499 residues long: MQSSSAGGSSHMQVQKLPTGIEGFDDICHGGLPSGRSTLISGTSGTGKTVFSLHFLHNGITQFDEPGIFVTFEESPSDILRNSASFGWNLQEMVEQDKLFILDASPDPDGQDVAGSFDLSGLIERINYAIVKYKAKRVAIDSMTAVFQQYDAISVVRREIFRLIARLKVIGVTTVMTTERIDEYGPIARYGVEEFVSDNVVILRNVLETEKRRRTVEILKLRGTTHMKGEFPFTMGTHGVSVFPLGAMRLTQRSSNVRISSGVPNLDEMCGGGFFKDSIILVTGATGTGKTLLVSKFIEDAFRNQERAILFAYEESRAQLLRNATSWGIDFEEMERQGLLKIICAYPESTGLEDHLEIIKTAIGQFKPSRMAIDSLSALARGVSLNAFRQFVIGVTGYAKQEEIAGFFTNTAEEFMGSHSITDSHISTITDTILLLQYVEIRGEMARAVNVFKMRGSWHDKRIREYVITDNGPQIKDSFSNFERIFSGAPHRITDDERA.

KaiC domains lie at 1–243 (MQSS…VSVF) and 257–499 (VRIS…DERA). Positions 45, 46, 47, 48, 49, 85, 220, 221, 222, 224, 226, 286, 287, 288, 289, 290, 291, and 292 each coordinate ATP. Thr-49 provides a ligand contact to Mg(2+). Thr-291 provides a ligand contact to Mg(2+). Glu-314 lines the Mg(2+) pocket. Residue Trp-327 coordinates ATP. At Ser-427 the chain carries Phosphoserine; by autocatalysis. Residue Thr-428 is modified to Phosphothreonine; by autocatalysis. ATP is bound by residues Arg-447, Lys-453, Met-454, Arg-455, Ser-457, His-459, and Lys-461.

The protein belongs to the KaiC family. Homohexamer; hexamerization is dependent on ATP-binding. Component of the KaiBC complex. KaiC interacts with SasA, activating its autokinase function and leading to RpaA activation. Mg(2+) is required as a cofactor. Phosphorylated on serine and threonine residues by autocatalysis. Has a 4 step phosphorylation cycle; the autokinase acts first on Thr-428, then Ser-427. When Ser-427 is modified KaiC switches to an autophosphatase mode, acting first on phospho-Thr-428 then phospho-Ser-427.

It catalyses the reaction L-seryl-[protein] + ATP = O-phospho-L-seryl-[protein] + ADP + H(+). The enzyme catalyses L-threonyl-[protein] + ATP = O-phospho-L-threonyl-[protein] + ADP + H(+). The catalysed reaction is ATP + H2O = ADP + phosphate + H(+). Its function is as follows. Central component of the KaiBC oscillator complex, which constitutes the main circadian regulator in cyanobacteria. Its composition changes during the circadian cycle to control KaiC phosphorylation. Autophosphorylates and has a weak ATPase activity; ATPase activity defines the circadian period. This Prochlorococcus marinus (strain MIT 9313) protein is Circadian clock oscillator protein KaiC.